The primary structure comprises 113 residues: Large ribosomal subunit protein P2 (113 aa).

The tract at residues 60–113 (SKVSSLSAGAGPSGGAAAAGADAGAAEAEKEEEPQEEEADVNMGDIFGGDDEDY) is disordered. Low complexity predominate over residues 74 to 85 (GAAAAGADAGAA). Residues 88–99 (EKEEEPQEEEAD) show a composition bias toward acidic residues.

Belongs to the eukaryotic ribosomal protein P1/P2 family. In terms of assembly, P1 and P2 exist as dimers at the large ribosomal subunit. In terms of processing, phosphorylated.

Functionally, plays an important role in the elongation step of protein synthesis. This chain is Large ribosomal subunit protein P2, found in Euplotes raikovi.